We begin with the raw amino-acid sequence, 367 residues long: UDP-galactopyranose mutase (367 aa).

Residues Phe12, Glu31–Lys32, Asn39, and His56–Ile57 contribute to the FAD site. Phe12 is a UDP-alpha-D-galactose binding site. UDP-alpha-D-galactose contacts are provided by Asn80, Thr152, Trp156, and Tyr181. Asp212–Phe213 is a binding site for FAD. Residues Asn268, Arg278, and Tyr311 each contribute to the UDP-alpha-D-galactose site. Arg340 lines the FAD pocket. Tyr346 contacts UDP-alpha-D-galactose. Residue Tyr347–Val352 coordinates FAD.

As to quaternary structure, homodimer. The cofactor is FAD.

It carries out the reaction UDP-alpha-D-galactose = UDP-alpha-D-galactofuranose. The protein operates within bacterial outer membrane biogenesis; lipopolysaccharide biosynthesis. Catalyzes the interconversion through a 2-keto intermediate of uridine diphosphogalactopyranose (UDP-GalP) into uridine diphosphogalactofuranose (UDP-GalF). This chain is UDP-galactopyranose mutase (glf), found in Escherichia coli (strain K12).